An 886-amino-acid polypeptide reads, in one-letter code: Isoleucine--tRNA ligase (886 aa).

The short motif at 60-70 is the 'HIGH' region element; that stretch reads PYANGDIHIGH. Position 546 (Glu-546) interacts with L-isoleucyl-5'-AMP. The short motif at 587 to 591 is the 'KMSKS' region element; it reads KMSKS. Lys-590 is an ATP binding site. Residues Cys-856, Cys-859, Cys-870, and Cys-873 each contribute to the Zn(2+) site.

It belongs to the class-I aminoacyl-tRNA synthetase family. IleS type 1 subfamily. Monomer. Requires Zn(2+) as cofactor.

The protein localises to the cytoplasm. It catalyses the reaction tRNA(Ile) + L-isoleucine + ATP = L-isoleucyl-tRNA(Ile) + AMP + diphosphate. Functionally, catalyzes the attachment of isoleucine to tRNA(Ile). As IleRS can inadvertently accommodate and process structurally similar amino acids such as valine, to avoid such errors it has two additional distinct tRNA(Ile)-dependent editing activities. One activity is designated as 'pretransfer' editing and involves the hydrolysis of activated Val-AMP. The other activity is designated 'posttransfer' editing and involves deacylation of mischarged Val-tRNA(Ile). The sequence is that of Isoleucine--tRNA ligase from Mesomycoplasma hyopneumoniae (strain J / ATCC 25934 / NCTC 10110) (Mycoplasma hyopneumoniae).